The chain runs to 217 residues: Small ribosomal subunit protein uS3 (217 aa).

The 71-residue stretch at 40–110 (IRDLINNSFN…EVYINIHEVR (71 aa)) folds into the KH type-2 domain.

Belongs to the universal ribosomal protein uS3 family. As to quaternary structure, part of the 30S ribosomal subunit. Forms a tight complex with proteins S10 and S14.

Its function is as follows. Binds the lower part of the 30S subunit head. Binds mRNA in the 70S ribosome, positioning it for translation. The protein is Small ribosomal subunit protein uS3 of Rickettsia canadensis (strain McKiel).